Here is an 879-residue protein sequence, read N- to C-terminus: Beta-mannosidase (879 aa).

The N-terminal stretch at 1–17 is a signal peptide; that stretch reads MLLRLLLLLAPCGAGFA. Residues asparagine 35 and asparagine 77 are each glycosylated (N-linked (GlcNAc...) asparagine). Cysteine 167 and cysteine 176 are oxidised to a cystine. 190 to 192 contributes to the substrate binding site; that stretch reads WDW. Residue asparagine 297 is glycosylated (N-linked (GlcNAc...) asparagine). A substrate-binding site is contributed by asparagine 456. The active-site Proton donor is glutamate 457. Cystine bridges form between cysteine 540–cysteine 629, cysteine 732–cysteine 761, and cysteine 764–cysteine 769. The active-site Nucleophile is the glutamate 554. Asparagine 803 is a glycosylation site (N-linked (GlcNAc...) asparagine).

It belongs to the glycosyl hydrolase 2 family. As to quaternary structure, monomer. N-glycosylated. As to expression, detected in kidney (at protein level). Found in spleen and to a lesser extent in liver. Not detected in kidney or brain.

The protein resides in the lysosome. It carries out the reaction Hydrolysis of terminal, non-reducing beta-D-mannose residues in beta-D-mannosides.. It participates in glycan metabolism; N-glycan degradation. In terms of biological role, exoglycosidase that cleaves the single beta-linked mannose residue from the non-reducing end of all N-linked glycoprotein oligosaccharides. This chain is Beta-mannosidase (MANBA), found in Capra hircus (Goat).